Consider the following 126-residue polypeptide: MARVSGVDIPREKRVEVALTYVFGIGRTRSKEILASTGVNPNTRVRDLAEEDLVKIREHVDANLRTEGDLRREVQANIRRKVEIGCYQGIRHRRGLPVHGQRTSTNARTRKGPRRAIAGKKKPGKK.

Residues R94–K126 are disordered. Residues R108 to K126 show a composition bias toward basic residues.

It belongs to the universal ribosomal protein uS13 family. Part of the 30S ribosomal subunit. Forms a loose heterodimer with protein S19. Forms two bridges to the 50S subunit in the 70S ribosome.

Its function is as follows. Located at the top of the head of the 30S subunit, it contacts several helices of the 16S rRNA. In the 70S ribosome it contacts the 23S rRNA (bridge B1a) and protein L5 of the 50S subunit (bridge B1b), connecting the 2 subunits; these bridges are implicated in subunit movement. Contacts the tRNAs in the A and P-sites. This chain is Small ribosomal subunit protein uS13, found in Streptomyces griseus subsp. griseus (strain JCM 4626 / CBS 651.72 / NBRC 13350 / KCC S-0626 / ISP 5235).